Here is a 466-residue protein sequence, read N- to C-terminus: Argininosuccinate lyase 1 (466 aa).

Belongs to the lyase 1 family. Argininosuccinate lyase subfamily.

It is found in the cytoplasm. The enzyme catalyses 2-(N(omega)-L-arginino)succinate = fumarate + L-arginine. Its pathway is amino-acid biosynthesis; L-arginine biosynthesis; L-arginine from L-ornithine and carbamoyl phosphate: step 3/3. This Mesorhizobium japonicum (strain LMG 29417 / CECT 9101 / MAFF 303099) (Mesorhizobium loti (strain MAFF 303099)) protein is Argininosuccinate lyase 1.